We begin with the raw amino-acid sequence, 116 residues long: MNSFMVMIMLTLTLSSIMALLAFWLPIMKPDSEKLSPYECGFDPQGSARLPFSLRFFLVAILFLLFDLEIALLLPSPWATNISNPEFTLLWASLFVLLLTLGLIYEWLQGGLDWAE.

The next 3 membrane-spanning stretches (helical) occupy residues 4–24 (FMVM…LAFW), 56–76 (FFLV…LLPS), and 87–107 (FTLL…IYEW).

It belongs to the complex I subunit 3 family.

The protein localises to the mitochondrion membrane. The catalysed reaction is a ubiquinone + NADH + 5 H(+)(in) = a ubiquinol + NAD(+) + 4 H(+)(out). In terms of biological role, core subunit of the mitochondrial membrane respiratory chain NADH dehydrogenase (Complex I) that is believed to belong to the minimal assembly required for catalysis. Complex I functions in the transfer of electrons from NADH to the respiratory chain. The immediate electron acceptor for the enzyme is believed to be ubiquinone. The sequence is that of NADH-ubiquinone oxidoreductase chain 3 (MT-ND3) from Petromyzon marinus (Sea lamprey).